A 286-amino-acid chain; its full sequence is ATP phosphoribosyltransferase (286 aa).

Belongs to the ATP phosphoribosyltransferase family. Long subfamily. Mg(2+) serves as cofactor.

Its subcellular location is the cytoplasm. The enzyme catalyses 1-(5-phospho-beta-D-ribosyl)-ATP + diphosphate = 5-phospho-alpha-D-ribose 1-diphosphate + ATP. Its pathway is amino-acid biosynthesis; L-histidine biosynthesis; L-histidine from 5-phospho-alpha-D-ribose 1-diphosphate: step 1/9. With respect to regulation, feedback inhibited by histidine. Catalyzes the condensation of ATP and 5-phosphoribose 1-diphosphate to form N'-(5'-phosphoribosyl)-ATP (PR-ATP). Has a crucial role in the pathway because the rate of histidine biosynthesis seems to be controlled primarily by regulation of HisG enzymatic activity. The sequence is that of ATP phosphoribosyltransferase from Paenarthrobacter aurescens (strain TC1).